A 2527-amino-acid chain; its full sequence is Highly reducing polyketide synthase poxF (2527 aa).

Positions 20–445 constitute a Ketosynthase family 3 (KS3) domain; that stretch reads VMPIAIIGMA…GANAHVIVES (426 aa). Catalysis depends on for beta-ketoacyl synthase activity residues Cys193, His328, and His368. Residues 560–882 are malonyl-CoA:ACP transacylase (MAT) domain; sequence VFTGQGAQWF…TYASCLSRGQ (323 aa). Positions 951-1086 are N-terminal hotdog fold; that stretch reads HDLLGVPAAG…GLCCTPSPAQ (136 aa). The interval 951 to 1243 is dehydratase (DH) domain; the sequence is HDLLGVPAAG…SVRVINNAGT (293 aa). The PKS/mFAS DH domain occupies 951 to 1270; it reads HDLLGVPAAG…CQSLGSSAVV (320 aa). The active-site Proton acceptor; for dehydratase activity is the His983. Positions 1108 to 1270 are C-terminal hotdog fold; it reads AWRILNPADT…CQSLGSSAVV (163 aa). Asp1174 (proton donor; for dehydratase activity) is an active-site residue. The segment at 1406-1587 is methyltransferase (CMet) domain; it reads EDQAEWSSVS…RLLAKAGFEP (182 aa). Residues 1823–2137 are enoyl reductase (ER) (ER) domain; it reads GLLNSLVFTE…TGKHMGKIVL (315 aa). The interval 2162–2339 is ketoreductase (KR) domain; sequence TYLLVGGVGG…AVSIDLGMVS (178 aa). In terms of domain architecture, Carrier spans 2445 to 2522; the sequence is EVTTLIQSAL…GLAGQMAKKS (78 aa). Residue Ser2482 is modified to O-(pantetheine 4'-phosphoryl)serine.

The protein operates within secondary metabolite biosynthesis. Highly reducing polyketide synthase; part of the gene cluster that mediates the biosynthesis of oxaleimides, cytotoxic compounds containing an unusual disubstituted succinimide moiety. The first step of the pathway is provided by the HR-PKS poxF that serves in a new mode of collaborative biosynthesis with the PKS-NRPS poxE, by providing the olefin containing amino acid substrate via the synthesis of an ACP-bound dec-4-enoate. The cytochrome P450 monooxygenase poxM-catalyzed oxidation at the alpha-position creates the enzyme-bound 2-hydroxydec-4-enoyl-ACP thioester, which may be prone to spontaneous hydrolysis to yield 2-hydroxydec-4-enoic acid due to increased electrophilicity of the carbonyl. 2-hydroxydec-4-enoic acid can then be further oxidized by poxM to yield the alpha-ketoacid 2-oxodec-4-enoicacid, which is reductively aminated by the aminotransferase poxL to yield (S,E)-2-aminodec-4-enoic acid. The Hybrid PKS-NRPS synthetase poxE then performs condensation between the octaketide product of its PKS modules and the amino group of (S,E)-2-aminodec-4-enoic acid which is activated and incorporated by the adenylation domain. The resulting aminoacyl product can be cyclized by the Diels-Alderase PoxQ and reductively released by the reductive (R) domain of poxE to yield an aldehyde intermediate. The released aldehyde is then substrate for a Knoevenagel condensation by the hydrolyase poxO followed by an oxidation at the 5-position of the pyrrolidone ring. The presence of the olefin from the amino acid building block allows for migration of the substituted allyl group to occur. This allylic transposition reaction takes place in a conjugate addition, semipinacol-like fashion to yield a succinimide intermediate. Iterative two-electron oxidations of the C7 methyl of the succinimide intermediate to the carboxylic acid can be catalyzed by one of two remaining cytochrome P450 monooxygenasess poxC or poxD to yield oxaleimide A. Subsequent oxidation yields the maleimide scaffold oxaleimide I. Both oxaleimide A and oxaleimide I can undergo oxidative modifications in the decalin ring to yield the series of products oxaleimides B to H. In Penicillium oxalicum, this protein is Highly reducing polyketide synthase poxF.